A 1468-amino-acid chain; its full sequence is Centrosomal protein of 290 kDa (1468 aa).

Coiled-coil stretches lie at residues 1-25 (ERQL…VGEK), 52-121 (SLSE…IEQA), 172-292 (KMYE…DEKA), 318-528 (VASK…EAQK), 559-592 (RIIL…ILSR), 627-688 (HTLK…QADN), and 736-1441 (IKLK…SEQF). A self-association (with itself or N-terminus) region spans residues 1060–1468 (TTGLTVDQVM…QENPVNFPIY (409 aa)). Residues 1130-1152 (LSKDAYSRPSTSGIDSDDHYQRE) are disordered.

As to quaternary structure, part of the tectonic-like complex (also named B9 complex). Interacts with ATF4 via its N-terminal region. Associates with the BBSome complex, interacting (via N-terminus) with BBS4. Interacts with IQCB1/NPHP5; IQCB1 and CEP290/NPHP6 are proposed to form a functional NPHP5-6 module localized to the centrosome. Interacts with NPHP4; the interaction likely requires additional interactors. Interacts with ZNF423, FAM161A, CEP162, CEP162, CEP131, TALPID3, CCDC13, CC2D2A, RPGRIP1. Can self-associate (homo- or heteromeric). Interacts with CCP110; required for suppressing cilia formation. Interacts with RPGR. Associates (via C-terminus) with microtubules; association to microtubule is reduced in response to cellular stress, such as ultraviolet light (UV) radiation or heat shock, in a process that requires p38 MAP kinase signaling. Interacts with FAM161A. Interacts with PCM1. Interacts with CCDC66. Interacts with ARMC9 and CSPP1. In terms of processing, ubiquitinated. May undergo monoubiquitination; monoubiquitination is inhibited in response to cellular stress, such as ultraviolet light (UV) radiation or heat shock, but does not cause its displacement from centriolar satellites.

It is found in the cytoplasm. The protein resides in the cytoskeleton. It localises to the microtubule organizing center. Its subcellular location is the centrosome. The protein localises to the centriolar satellite. It is found in the nucleus. The protein resides in the cell projection. It localises to the cilium. Its subcellular location is the cilium basal body. The protein localises to the centriole. It is found in the cytoplasmic vesicle. Involved in early and late steps in cilia formation. Its association with CCP110 is required for inhibition of primary cilia formation by CCP110. May play a role in early ciliogenesis in the disappearance of centriolar satellites and in the transition of primary ciliar vesicles (PCVs) to capped ciliary vesicles (CCVs). Required for the centrosomal recruitment of RAB8A and for the targeting of centriole satellite proteins to centrosomes such as of PCM1. Required for the correct localization of ciliary and phototransduction proteins in retinal photoreceptor cells; may play a role in ciliary transport processes. Required for efficient recruitment of RAB8A to primary cilium. In the ciliary transition zone is part of the tectonic-like complex which is required for tissue-specific ciliogenesis and may regulate ciliary membrane composition. Involved in regulation of the BBSome complex integrity, specifically for presence of BBS2, BBS5 and BBS8/TTC8 in the complex, and in ciliary targeting of selected BBSome cargos. May play a role in controlling entry of the BBSome complex to cilia possibly implicating IQCB1/NPHP5. Activates ATF4-mediated transcription. In Bos taurus (Bovine), this protein is Centrosomal protein of 290 kDa (CEP290).